The chain runs to 798 residues: Protocadherin beta-13 (798 aa).

The signal sequence occupies residues 1 to 28 (MEASGKLICRQRQVLFSFLLLGLSLAGA). Residues 29–690 (AEPRSYSVVE…AQADSLTVYL (662 aa)) are Extracellular-facing. 5 consecutive Cadherin domains span residues 36–134 (VVEE…SPVF), 139–243 (MLVK…APEF), 248–348 (YRVQ…APEV), 353–451 (FTSP…APAF), and 456–561 (YTLF…SPFV). Residues N418 and N436 are each glycosylated (N-linked (GlcNAc...) asparagine). N-linked (GlcNAc...) asparagine glycosylation is present at N567. Residues 568 to 671 (GSAPCTELVP…LVDGFSQPYL (104 aa)) form the Cadherin 6 domain. Residues 691 to 711 (VVALASVSSLFLFSVLLFVAV) traverse the membrane as a helical segment. Residues 712-798 (RLCRRSRAAS…FPNNFGFNIQ (87 aa)) lie on the Cytoplasmic side of the membrane.

Its subcellular location is the cell membrane. In terms of biological role, potential calcium-dependent cell-adhesion protein. May be involved in the establishment and maintenance of specific neuronal connections in the brain. The protein is Protocadherin beta-13 (PCDHB13) of Pan troglodytes (Chimpanzee).